The following is a 137-amino-acid chain: Endoribonuclease YbeY (137 aa).

His-105, His-109, and Asp-115 together coordinate Zn(2+).

This sequence belongs to the endoribonuclease YbeY family. Requires Zn(2+) as cofactor.

It localises to the cytoplasm. Its function is as follows. Single strand-specific metallo-endoribonuclease involved in late-stage 70S ribosome quality control and in maturation of the 3' terminus of the 16S rRNA. The sequence is that of Endoribonuclease YbeY from Chlorobium luteolum (strain DSM 273 / BCRC 81028 / 2530) (Pelodictyon luteolum).